An 80-amino-acid chain; its full sequence is uncharacterized protein (80 aa).

This is an uncharacterized protein from Methanothermobacter thermautotrophicus (Methanobacterium thermoformicicum).